We begin with the raw amino-acid sequence, 279 residues long: Putative pyruvate, phosphate dikinase regulatory protein (279 aa).

153–160 (GISRTSKT) provides a ligand contact to ADP.

It belongs to the pyruvate, phosphate/water dikinase regulatory protein family. PDRP subfamily.

The enzyme catalyses N(tele)-phospho-L-histidyl/L-threonyl-[pyruvate, phosphate dikinase] + ADP = N(tele)-phospho-L-histidyl/O-phospho-L-threonyl-[pyruvate, phosphate dikinase] + AMP + H(+). It catalyses the reaction N(tele)-phospho-L-histidyl/O-phospho-L-threonyl-[pyruvate, phosphate dikinase] + phosphate + H(+) = N(tele)-phospho-L-histidyl/L-threonyl-[pyruvate, phosphate dikinase] + diphosphate. Bifunctional serine/threonine kinase and phosphorylase involved in the regulation of the pyruvate, phosphate dikinase (PPDK) by catalyzing its phosphorylation/dephosphorylation. This is Putative pyruvate, phosphate dikinase regulatory protein from Bartonella bacilliformis (strain ATCC 35685 / KC583 / Herrer 020/F12,63).